A 366-amino-acid polypeptide reads, in one-letter code: Fe-S cluster assembly protein DRE2 (366 aa).

Residues 8–167 form an N-terminal SAM-like domain region; the sequence is AQGSGRFLLL…KPDFGAQQAV (160 aa). The disordered stretch occupies residues 100–136; the sequence is RNRDNQIWGSGSDSAAGLGSSDGGGGGGGGEKKSSSE. A compositionally biased stretch (low complexity) spans 108–118; that stretch reads GSGSDSAAGLG. The span at 119-128 shows a compositional bias: gly residues; that stretch reads SSDGGGGGGG. The interval 168 to 258 is linker; it reads PLKLGRKKNL…EEELLGEFDM (91 aa). The [2Fe-2S] cluster site is built by C268, C279, C282, and C284. Positions 268–284 are fe-S binding site A; sequence CRPKAGKRRRACKDCTC. Residues C329, C332, C340, and C343 each contribute to the [4Fe-4S] cluster site. 2 consecutive short sequence motifs (cx2C motif) follow at residues 329–332 and 340–343; these read CGNC and CDGC. A fe-S binding site B region spans residues 329-343; the sequence is CGNCALGDAFRCDGC.

Belongs to the anamorsin family. Monomer. Interacts with TAH18. Interacts with MIA40. [2Fe-2S] cluster serves as cofactor. The cofactor is [4Fe-4S] cluster.

It is found in the cytoplasm. Its subcellular location is the mitochondrion intermembrane space. In terms of biological role, component of the cytosolic iron-sulfur (Fe-S) protein assembly (CIA) machinery required for the maturation of extramitochondrial Fe-S proteins. Part of an electron transfer chain functioning in an early step of cytosolic Fe-S biogenesis, facilitating the de novo assembly of a [4Fe-4S] cluster on the scaffold complex CFD1-NBP35. Electrons are transferred to DRE2 from NADPH via the FAD- and FMN-containing protein TAH18. TAH18-DRE2 are also required for the assembly of the diferric tyrosyl radical cofactor of ribonucleotide reductase (RNR), probably by providing electrons for reduction during radical cofactor maturation in the catalytic small subunit RNR2. The sequence is that of Fe-S cluster assembly protein DRE2 from Paracoccidioides lutzii (strain ATCC MYA-826 / Pb01) (Paracoccidioides brasiliensis).